A 99-amino-acid polypeptide reads, in one-letter code: Prostate and testis expressed protein 14 (99 aa).

The N-terminal stretch at 1 to 21 (MGKNILLLLLGLSFVIGFLQA) is a signal peptide. The UPAR/Ly6 domain occupies 22–99 (LRCLECDMLN…CHDQSLCNEF (78 aa)). Disulfide bonds link Cys-24–Cys-51, Cys-27–Cys-36, Cys-43–Cys-69, Cys-73–Cys-89, and Cys-90–Cys-96. Asn-40 carries N-linked (GlcNAc...) asparagine glycosylation. N-linked (GlcNAc...) asparagine glycosylation is found at Asn-75 and Asn-82.

Belongs to the PATE family. As to quaternary structure, monomer.

It localises to the secreted. This Rattus norvegicus (Rat) protein is Prostate and testis expressed protein 14.